We begin with the raw amino-acid sequence, 179 residues long: MKNRLGTWWVAILCMLLASHLSTVKARGIKHRFKWNRKVLPSSGGQITEARVAENRPGAFIKQGRKLDIDFGAEGNRYYAANYWQFPDGIYYEGCSEANVTKEMLVTSCVNATQAANQAEFSREKQDSKLHQRVLWRLIKEICSAKHCDFWLERGAALRVAVDQPAMVCLLGFVWFIVK.

The N-terminal stretch at 1–25 (MKNRLGTWWVAILCMLLASHLSTVK) is a signal peptide. Residues 27 to 50 (RGIKHRFKWNRKVLPSSGGQITEA) form a flexible tail region. A globular region spans residues 51 to 155 (RVAENRPGAF…KHCDFWLERG (105 aa)). 2 cysteine pairs are disulfide-bonded: cysteine 95-cysteine 148 and cysteine 109-cysteine 143. N-linked (GlcNAc...) asparagine glycans are attached at residues asparagine 99 and asparagine 111. Residues 125 to 142 (KQDSKLHQRVLWRLIKEI) are cu(2+) binding. Glycine 155 carries GPI-anchor amidated glycine lipidation. Positions 156–179 (AALRVAVDQPAMVCLLGFVWFIVK) are cleaved as a propeptide — removed in mature form.

The protein belongs to the prion family. In terms of processing, N-glycosylated. N-glycosylated at two distinct sites. Post-translationally, O-glycosylated. In terms of tissue distribution, detected in testis. Detected within seminiferous tubules, on round and elongated spermatids (at protein level). Not detected in brain (at protein level). Detected in testis, and at low levels in heart. Expression in brain is very low and barely detectable.

Its subcellular location is the cell membrane. In terms of biological role, required for normal acrosome reaction and for normal male fertility. Can bind Cu(2+). This Mus musculus (Mouse) protein is Prion-like protein doppel (Prnd).